We begin with the raw amino-acid sequence, 426 residues long: Serine hydroxymethyltransferase (426 aa).

(6S)-5,6,7,8-tetrahydrofolate is bound by residues Leu115 and Gly119–Ile121. Lys225 bears the N6-(pyridoxal phosphate)lysine mark.

Belongs to the SHMT family. As to quaternary structure, homodimer. The cofactor is pyridoxal 5'-phosphate.

The protein resides in the cytoplasm. Its pathway is amino-acid biosynthesis; glycine biosynthesis; glycine from L-serine: step 1/1. Functionally, catalyzes the reversible interconversion of serine and glycine with a modified folate serving as the one-carbon carrier. Also exhibits a pteridine-independent aldolase activity toward beta-hydroxyamino acids, producing glycine and aldehydes, via a retro-aldol mechanism. The sequence is that of Serine hydroxymethyltransferase from Thermoplasma acidophilum (strain ATCC 25905 / DSM 1728 / JCM 9062 / NBRC 15155 / AMRC-C165).